A 257-amino-acid polypeptide reads, in one-letter code: Pyridoxine 5'-phosphate synthase (257 aa).

A 3-amino-2-oxopropyl phosphate-binding site is contributed by Asn6. A 1-deoxy-D-xylulose 5-phosphate-binding site is contributed by Asp8–His9. Position 17 (Arg17) interacts with 3-amino-2-oxopropyl phosphate. His41 acts as the Proton acceptor in catalysis. Residues Arg43 and His48 each coordinate 1-deoxy-D-xylulose 5-phosphate. Glu68 serves as the catalytic Proton acceptor. Position 98 (Thr98) interacts with 1-deoxy-D-xylulose 5-phosphate. Catalysis depends on His210, which acts as the Proton donor. 3-amino-2-oxopropyl phosphate-binding positions include Gly211 and Gly232 to Gln233.

It belongs to the PNP synthase family. Homooctamer; tetramer of dimers.

It localises to the cytoplasm. The enzyme catalyses 3-amino-2-oxopropyl phosphate + 1-deoxy-D-xylulose 5-phosphate = pyridoxine 5'-phosphate + phosphate + 2 H2O + H(+). The protein operates within cofactor biosynthesis; pyridoxine 5'-phosphate biosynthesis; pyridoxine 5'-phosphate from D-erythrose 4-phosphate: step 5/5. In terms of biological role, catalyzes the complicated ring closure reaction between the two acyclic compounds 1-deoxy-D-xylulose-5-phosphate (DXP) and 3-amino-2-oxopropyl phosphate (1-amino-acetone-3-phosphate or AAP) to form pyridoxine 5'-phosphate (PNP) and inorganic phosphate. This Campylobacter jejuni subsp. jejuni serotype O:2 (strain ATCC 700819 / NCTC 11168) protein is Pyridoxine 5'-phosphate synthase.